The chain runs to 526 residues: Radial spoke head protein 6 homolog A (526 aa).

Disordered stretches follow at residues 180–231, 371–411, and 469–526; these read EGED…EENG, VKSE…DAEI, and PPAP…EEDD. Composition is skewed to acidic residues over residues 181–212 and 374–395; these read GEDD…EAED and EEEE…EPEP. Residues 497–506 are compositionally biased toward basic and acidic residues; sequence QALKAAKEEA. Residues 507 to 526 show a composition bias toward acidic residues; that stretch reads EAAAEEMEEEEDEEEEEEDD.

It belongs to the flagellar radial spoke RSP4/6 family. In terms of assembly, component of sperm axonemal radial spoke complexes.

It localises to the cytoplasm. The protein resides in the cytoskeleton. Its subcellular location is the flagellum axoneme. Its function is as follows. Functions as part of radial spoke complexes in the axoneme of sperm flagella that play an important part in motility. The triple radial spokes (RS1, RS2 and RS3) are required to modulate beating of the sperm flagellum. The protein is Radial spoke head protein 6 homolog A (rsph6a) of Xenopus tropicalis (Western clawed frog).